A 183-amino-acid polypeptide reads, in one-letter code: Small ribosomal subunit protein bS16 (183 aa).

The segment covering 149 to 161 (EKKAAEAAAKAEA) has biased composition (basic and acidic residues). Positions 149–183 (EKKAAEAAAKAEAEAANAPAEEAPAAEATEAPAEA) are disordered. A compositionally biased stretch (low complexity) spans 162–183 (EAANAPAEEAPAAEATEAPAEA).

The protein belongs to the bacterial ribosomal protein bS16 family.

The sequence is that of Small ribosomal subunit protein bS16 from Phocaeicola vulgatus (strain ATCC 8482 / DSM 1447 / JCM 5826 / CCUG 4940 / NBRC 14291 / NCTC 11154) (Bacteroides vulgatus).